A 168-amino-acid chain; its full sequence is UPF0178 protein RBAM_023530 (168 aa).

Belongs to the UPF0178 family.

The sequence is that of UPF0178 protein RBAM_023530 from Bacillus velezensis (strain DSM 23117 / BGSC 10A6 / LMG 26770 / FZB42) (Bacillus amyloliquefaciens subsp. plantarum).